The chain runs to 189 residues: Large ribosomal subunit protein bL9 (189 aa).

Belongs to the bacterial ribosomal protein bL9 family.

Binds to the 23S rRNA. This is Large ribosomal subunit protein bL9 from Beijerinckia indica subsp. indica (strain ATCC 9039 / DSM 1715 / NCIMB 8712).